The primary structure comprises 287 residues: Lipoyl synthase (287 aa).

The [4Fe-4S] cluster site is built by Cys-38, Cys-43, Cys-49, Cys-64, Cys-68, Cys-71, and Ser-277. A Radical SAM core domain is found at 50–266 (WSRGTATFLL…KTVAESLGLR (217 aa)).

This sequence belongs to the radical SAM superfamily. Lipoyl synthase family. Requires [4Fe-4S] cluster as cofactor.

It is found in the cytoplasm. The enzyme catalyses [[Fe-S] cluster scaffold protein carrying a second [4Fe-4S](2+) cluster] + N(6)-octanoyl-L-lysyl-[protein] + 2 oxidized [2Fe-2S]-[ferredoxin] + 2 S-adenosyl-L-methionine + 4 H(+) = [[Fe-S] cluster scaffold protein] + N(6)-[(R)-dihydrolipoyl]-L-lysyl-[protein] + 4 Fe(3+) + 2 hydrogen sulfide + 2 5'-deoxyadenosine + 2 L-methionine + 2 reduced [2Fe-2S]-[ferredoxin]. It participates in protein modification; protein lipoylation via endogenous pathway; protein N(6)-(lipoyl)lysine from octanoyl-[acyl-carrier-protein]: step 2/2. Its function is as follows. Catalyzes the radical-mediated insertion of two sulfur atoms into the C-6 and C-8 positions of the octanoyl moiety bound to the lipoyl domains of lipoate-dependent enzymes, thereby converting the octanoylated domains into lipoylated derivatives. The protein is Lipoyl synthase of Chlorobium phaeobacteroides (strain DSM 266 / SMG 266 / 2430).